Consider the following 783-residue polypeptide: MAPNLSKAKDDLIGDVVAVDGLIKPPRFTLKGKDLAVDGHPFLLDVPANIRLTPASTLVPNSDVPAAAAGSFLGFDAPAAKDRHVVPIGKLRDTRFMSIFRFKVWWTTHWVGTNGRDVENETQMMILDQSGTKSSPTGPRPYVLLLPIVEGPFRACLESGKAEDYVHMVLESGSSTVRGSVFRSAVYLHAGDDPFDLVKDAMRVVRAHLGTFRLMEEKTPPPIVDKFGWCTWDAFYLKVHPEGVWEGVRRLADGGCPPGLVLIDDGWQSICHDDDDLGSGAEGMNRTSAGEQMPCRLIKFQENYKFREYKGGMGGFVREMKAAFPTVEQVYVWHALCGYWGGLRPGAPGLPPAKVVAPRLSPGLQRTMEDLAVDKIVNNGVGLVDPRRARELYEGLHSHLQASGIDGVKVDVIHLLEMVCEEYGGRVELAKAYFAGLTESVRRHFNGNGVIASMEHCNDFMLLGTEAVALGRVGDDFWCTDPSGDPDGTFWLQGCHMVHCAYNSLWMGAFIHPDWDMFQSTHPCAAFHAASRAVSGGPVYVSDAVGCHDFDLLRRLALPDGTILRCERYALPTRDCLFADPLHDGKTMLKIWNVNKFSGVLGAFNCQGGGWSREARRNMCAAGFSVPVTARASPADVEWSHGGGGGDRFAVYFVEARKLQLLRRDESVELTLEPFTYELLVVAPVRAIVSPELGIGFAPIGLANMLNAGGAVQGFEAARKDGDVAAEVAVKGAGEMVAYSSARPRLCKVNGQDAEFKYEDGIVTVDVPWTGSSKKLSRVEYFY.

The protein belongs to the glycosyl hydrolases 36 family.

It catalyses the reaction alpha-D-galactosyl-(1-&gt;3)-1D-myo-inositol + sucrose = raffinose + myo-inositol. Its activity is regulated as follows. Inhibited by Ag(2)+, Hg(2+), Zn(2+), p-chloromercuribenzoate (pCMB) and 1-deoxygalactonojirimycin. In terms of biological role, transglycosidase operating by a ping-pong reaction mechanism. Involved in the synthesis of raffinose, a major soluble carbohydrate in seeds, roots and tubers. Specific for galactinol and p-nitrophenyl-alpha-D-galactoside as galactosyl donors. Able to utilize sucrose, lactose, 4-beta-galactobiose, N-acetyl-D-lactosamine, trehalose and lacto-N-biose as acceptors. May also act as a glycoside hydrolase. This is Galactinol--sucrose galactosyltransferase (RFS) from Oryza sativa subsp. japonica (Rice).